The primary structure comprises 444 residues: C4-dicarboxylate transport protein (444 aa).

The next 9 membrane-spanning stretches (helical) occupy residues 17-37 (PFYT…ILLG), 57-77 (LVKM…IAGM), 92-112 (LYFL…ANVV), 139-159 (EQSI…GAFA), 161-181 (GDIL…AMVG), 201-221 (LVAI…AFTI), 234-254 (MLIG…LGAV), 320-340 (IYMT…LSWG), and 368-388 (AATL…ILGI).

Belongs to the dicarboxylate/amino acid:cation symporter (DAACS) (TC 2.A.23) family.

The protein localises to the cell inner membrane. Its function is as follows. Responsible for the transport of dicarboxylates such as succinate, fumarate, and malate from the periplasm across the membrane. The polypeptide is C4-dicarboxylate transport protein (Rhizobium johnstonii (strain DSM 114642 / LMG 32736 / 3841) (Rhizobium leguminosarum bv. viciae)).